The chain runs to 305 residues: Peroxisome biogenesis factor 2 (305 aa).

The Peroxisomal matrix portion of the chain corresponds to 1–15 (MAAREESTQSANRVL). The helical transmembrane segment at 16–42 (RISQLDALELNKALEQLVWSQFTQCFH) threads the bilayer. The Cytoplasmic segment spans residues 43-48 (GFKPGL). The helical transmembrane segment at 49-74 (LARFEPEVKAFLWLFLWRFTIYSKNA) threads the bilayer. Residues 75 to 98 (TVGQSVLNIQYKNDSSPNPVYQPP) lie on the Peroxisomal matrix side of the membrane. Residues 99-125 (SKNQKLLYAVCTIGGRWLEERCYDLFR) form a helical membrane-spanning segment. The Cytoplasmic portion of the chain corresponds to 126–133 (NRHLASFG). Residues 134–160 (KAKQCMNFVVGLLKLGELMNFLIFLQK) form a helical membrane-spanning segment. Residues 161-187 (GKFATLTERLLGIHSVFCKPQSMREVG) lie on the Peroxisomal matrix side of the membrane. Residues 188–211 (FEYMNRELLWHGFAEFLVFLLPLI) form a helical membrane-spanning segment. Residues 212–305 (NIQKLKAKLS…GIEMSEVNAL (94 aa)) lie on the Cytoplasmic side of the membrane. Positions 244, 247, 259, 261, 264, 267, 280, and 283 each coordinate Zn(2+). The RING-type zinc finger occupies 244–284 (CALCGEWPTMPHTIGCEHVFCYYCVKSSFLFDMYFTCPKCG).

This sequence belongs to the pex2/pex10/pex12 family. As to quaternary structure, component of the PEX2-PEX10-PEX12 retrotranslocation channel, composed of PEX2, PEX10 and PEX12. Post-translationally, forms intramolecular and intermolecular disulfide bonds in response to reactive oxygen species (ROS), promoting higher stability.

It localises to the peroxisome membrane. The enzyme catalyses [E2 ubiquitin-conjugating enzyme]-S-ubiquitinyl-L-cysteine + [acceptor protein]-L-cysteine = [E2 ubiquitin-conjugating enzyme]-L-cysteine + [acceptor protein]-S-ubiquitinyl-L-cysteine.. It catalyses the reaction S-ubiquitinyl-[E2 ubiquitin-conjugating enzyme]-L-cysteine + [acceptor protein]-L-lysine = [E2 ubiquitin-conjugating enzyme]-L-cysteine + N(6)-ubiquitinyl-[acceptor protein]-L-lysine.. It functions in the pathway protein modification; protein ubiquitination. E3 ubiquitin-protein ligase component of a retrotranslocation channel required for peroxisome organization by mediating export of the PEX5 receptor from peroxisomes to the cytosol, thereby promoting PEX5 recycling. The retrotranslocation channel is composed of PEX2, PEX10 and PEX12; each subunit contributing transmembrane segments that coassemble into an open channel that specifically allows the passage of PEX5 through the peroxisomal membrane. PEX2 also regulates peroxisome organization by acting as a E3 ubiquitin-protein ligase. PEX2 ubiquitinates PEX5 during its passage through the retrotranslocation channel: catalyzes monoubiquitination of PEX5 at 'Cys-11', a modification that acts as a signal for PEX5 extraction into the cytosol. Required for pexophagy in response to starvation by mediating ubiquitination of peroxisomal proteins, such as PEX5 and ABCD3/PMP70. Also involved in the response to reactive oxygen species (ROS) by mediating 'Lys-48'-linked polyubiquitination and subsequent degradation of PNPLA2/ATGL, thereby regulating lipolysis. This chain is Peroxisome biogenesis factor 2 (Pex2), found in Rattus norvegicus (Rat).